The following is a 27-amino-acid chain: Protamine-B (27 aa).

The interval 1–27 (ARRRRRSSRPQRRRRRRRHGRRRRGRR) is disordered.

As to expression, testis.

The protein resides in the nucleus. It localises to the chromosome. Functionally, protamines substitute for histones in the chromatin of sperm during the haploid phase of spermatogenesis. They compact sperm DNA into a highly condensed, stable and inactive complex. In Acipenser stellatus (Sevruga), this protein is Protamine-B.